The following is a 432-amino-acid chain: 5'-deoxyadenosine deaminase (432 aa).

Zn(2+) is bound by residues histidine 63 and histidine 65. Positions 92 and 184 each coordinate substrate. Histidine 211 is a binding site for Zn(2+). Positions 214 and 299 each coordinate substrate. Aspartate 299 provides a ligand contact to Zn(2+).

This sequence belongs to the metallo-dependent hydrolases superfamily. MTA/SAH deaminase family. In terms of assembly, homotetramer. Zn(2+) serves as cofactor.

It catalyses the reaction 5'-deoxyadenosine + H2O + H(+) = 5'-deoxyinosine + NH4(+). It carries out the reaction S-adenosyl-L-homocysteine + H2O + H(+) = S-inosyl-L-homocysteine + NH4(+). The catalysed reaction is S-methyl-5'-thioadenosine + H2O + H(+) = S-methyl-5'-thioinosine + NH4(+). The enzyme catalyses adenosine + H2O + H(+) = inosine + NH4(+). The protein operates within amino-acid biosynthesis; S-adenosyl-L-methionine biosynthesis. Functionally, catalyzes the deamination of three SAM-derived enzymatic products, namely 5'-deoxyadenosine, S-adenosyl-L-homocysteine, and 5'-methylthioadenosine, to produce the inosine analogs. Can also deaminate adenosine. The preferred substrate for this enzyme is 5'-deoxyadenosine, but all these substrates are efficiently deaminated. Likely functions in a S-adenosyl-L-methionine (SAM) recycling pathway from S-adenosyl-L-homocysteine (SAH) produced from SAM-dependent methylation reactions. May also be involved in the recycling of 5'-deoxyadenosine, whereupon the 5'-deoxyribose moiety of 5'-deoxyinosine is further metabolized to deoxyhexoses used for the biosynthesis of aromatic amino acids in methanogens. The chain is 5'-deoxyadenosine deaminase from Methanosarcina acetivorans (strain ATCC 35395 / DSM 2834 / JCM 12185 / C2A).